Reading from the N-terminus, the 456-residue chain is MSQEIWADVLGYVRKNISEVEYHTWFAPLKNLGVQDGSLVLGVRNSFAQEWLRKQYQGLLEDALRSLGAQHPQVSFQVLPASQDALLLPSDPPPAPISPGRAPAPPPADNRKTLNPKYTFENFVVGPNNNLAHAAALAVAESPGKAYNPLFIYGDVGLGKTHLMHAVGHYIAERFPEKRIEYVSTETFTNELINAIREDKTTQFRNRYRSVDLLLVDDIQFLAGKERTQEEFFHTFNALYENHKQIILSSDRPPKDIQTLEGRLRSRFEWGLITDIQSPEFETRVAILKMNAEHNRIDIPQEVLELIARQVTTNIRELEGALMRVVAFSSLNNVPFSRAVASKALSNVFAPQEVKVEMMDVLRQVASHFNMPPDVIRGSGRVREVVVPRQVAQYLIRDLTDHSLPEIGQFFGRDHSTVMHAISKVTEQLGKDSELTAAVETLRRKMKGLEDEDSRA.

The domain I, interacts with DnaA modulators stretch occupies residues 1 to 79 (MSQEIWADVL…QHPQVSFQVL (79 aa)). The domain II stretch occupies residues 79-112 (LPASQDALLLPSDPPPAPISPGRAPAPPPADNRK). The tract at residues 89–112 (PSDPPPAPISPGRAPAPPPADNRK) is disordered. Pro residues predominate over residues 90–108 (SDPPPAPISPGRAPAPPPA). Positions 113-329 (TLNPKYTFEN…GALMRVVAFS (217 aa)) are domain III, AAA+ region. Residues Gly157, Gly159, Lys160, and Thr161 each coordinate ATP. The segment at 330 to 456 (SLNNVPFSRA…KGLEDEDSRA (127 aa)) is domain IV, binds dsDNA.

It belongs to the DnaA family. Oligomerizes as a right-handed, spiral filament on DNA at oriC.

It is found in the cytoplasm. Plays an essential role in the initiation and regulation of chromosomal replication. ATP-DnaA binds to the origin of replication (oriC) to initiate formation of the DNA replication initiation complex once per cell cycle. Binds the DnaA box (a 9 base pair repeat at the origin) and separates the double-stranded (ds)DNA. Forms a right-handed helical filament on oriC DNA; dsDNA binds to the exterior of the filament while single-stranded (ss)DNA is stabiized in the filament's interior. The ATP-DnaA-oriC complex binds and stabilizes one strand of the AT-rich DNA unwinding element (DUE), permitting loading of DNA polymerase. After initiation quickly degrades to an ADP-DnaA complex that is not apt for DNA replication. Binds acidic phospholipids. The protein is Chromosomal replication initiator protein DnaA of Deinococcus deserti (strain DSM 17065 / CIP 109153 / LMG 22923 / VCD115).